Consider the following 347-residue polypeptide: Dihydroorotase (347 aa).

Residues His-17 and His-19 each contribute to the Zn(2+) site. Residues 19–21 and Asn-45 each bind substrate; that span reads HLR. Residues Lys-103, His-140, and His-178 each contribute to the Zn(2+) site. At Lys-103 the chain carries N6-carboxylysine. His-140 is a substrate binding site. Residue Leu-223 coordinates substrate. Asp-251 serves as a coordination point for Zn(2+). The active site involves Asp-251. Residues His-255 and Ala-267 each contribute to the substrate site.

It belongs to the metallo-dependent hydrolases superfamily. DHOase family. Class II DHOase subfamily. In terms of assembly, homodimer. Zn(2+) serves as cofactor.

It catalyses the reaction (S)-dihydroorotate + H2O = N-carbamoyl-L-aspartate + H(+). Its pathway is pyrimidine metabolism; UMP biosynthesis via de novo pathway; (S)-dihydroorotate from bicarbonate: step 3/3. Functionally, catalyzes the reversible cyclization of carbamoyl aspartate to dihydroorotate. The polypeptide is Dihydroorotase (Pectobacterium atrosepticum (strain SCRI 1043 / ATCC BAA-672) (Erwinia carotovora subsp. atroseptica)).